The chain runs to 79 residues: DNA-directed RNA polymerase subunit omega (79 aa).

The protein belongs to the RNA polymerase subunit omega family. In terms of assembly, the RNAP catalytic core consists of 2 alpha, 1 beta, 1 beta' and 1 omega subunit. When a sigma factor is associated with the core the holoenzyme is formed, which can initiate transcription.

The enzyme catalyses RNA(n) + a ribonucleoside 5'-triphosphate = RNA(n+1) + diphosphate. Its function is as follows. Promotes RNA polymerase assembly. Latches the N- and C-terminal regions of the beta' subunit thereby facilitating its interaction with the beta and alpha subunits. This is DNA-directed RNA polymerase subunit omega from Thermotoga petrophila (strain ATCC BAA-488 / DSM 13995 / JCM 10881 / RKU-1).